A 465-amino-acid polypeptide reads, in one-letter code: Uronate isomerase (465 aa).

The protein belongs to the metallo-dependent hydrolases superfamily. Uronate isomerase family.

It catalyses the reaction D-glucuronate = D-fructuronate. The enzyme catalyses aldehydo-D-galacturonate = keto-D-tagaturonate. It functions in the pathway carbohydrate metabolism; pentose and glucuronate interconversion. The sequence is that of Uronate isomerase from Streptococcus equi subsp. equi (strain 4047).